The primary structure comprises 102 residues: Circadian clock oscillator protein KaiA (102 aa).

The KaiA C-terminal domain maps to 1 to 102 (MTQEVDQQIL…CEAYRGAIFK (102 aa)).

It belongs to the KaiA family. Homodimer. The KaiABC complex composition changes during the circadian cycle to control KaiC phosphorylation. Complexes KaiC(6), KaiA(2-4):KaiC(6), KaiB(6):KaiC(6) and KaiC(6):KaiB(6):KaiA(12) are among the most important forms, many form cooperatively. KaiA and CikA bind to the same region of the KaiB(fs) form and therefore compete.

Key component of the KaiABC oscillator complex, which constitutes the main circadian regulator in cyanobacteria. Complex composition changes during the circadian cycle to control KaiC phosphorylation. KaiA stimulates KaiC autophosphorylation, while KaiB sequesters KaiA, leading to KaiC autodephosphorylation. KaiA binding to the KaiC CII domain during the subjective day yields KaiA(2-4):KaiC(6) complexes which stimulate KaiC autophosphorylation. Phospho-Ser-431 KaiC accumulation triggers binding of KaiB during the subjective night to form the KaiB(6):KaiC(6) complex, leading to changes in the output regulators CikA and SasA. KaiB(6):KaiC(6) formation exposes a site for KaiA binding on KaiB that sequesters KaiA from KaiC's CII domain, making the KaiC(6):KaiB(6):KaiA(12) complex resulting in KaiC autodephosphorylation. Complete dephosphorylation of KaiC leads to dissociation of KaiA(2):KaiB(1), completing 1 cycle of the Kai oscillator. The chain is Circadian clock oscillator protein KaiA from Nostoc sp. (strain PCC 7120 / SAG 25.82 / UTEX 2576).